Consider the following 177-residue polypeptide: Sec-independent protein translocase protein TatB (177 aa).

The chain crosses the membrane as a helical span at residues 1–21 (MFDFAWSEIAVIGVVALVVIG). A compositionally biased stretch (basic and acidic residues) spans 136–146 (REKTVSSETAR). Residues 136–177 (REKTVSSETARRAATAPAFIPPGEAFRSARRAPAFIPPADQG) are disordered.

It belongs to the TatB family. In terms of assembly, the Tat system comprises two distinct complexes: a TatABC complex, containing multiple copies of TatA, TatB and TatC subunits, and a separate TatA complex, containing only TatA subunits. Substrates initially bind to the TatABC complex, which probably triggers association of the separate TatA complex to form the active translocon.

It is found in the cell inner membrane. Its function is as follows. Part of the twin-arginine translocation (Tat) system that transports large folded proteins containing a characteristic twin-arginine motif in their signal peptide across membranes. Together with TatC, TatB is part of a receptor directly interacting with Tat signal peptides. TatB may form an oligomeric binding site that transiently accommodates folded Tat precursor proteins before their translocation. The sequence is that of Sec-independent protein translocase protein TatB from Granulibacter bethesdensis (strain ATCC BAA-1260 / CGDNIH1).